The sequence spans 328 residues: Organic solute transporter alpha-like protein (328 aa).

Over 1–44 the chain is Extracellular; the sequence is MNASENYFTMDPTENISQVLDQNRNNTNSLRTHPTVEEYYENMT. 4 N-linked (GlcNAc...) asparagine glycosylation sites follow: Asn-2, Asn-15, Asn-25, and Asn-42. The chain crosses the membrane as a helical span at residues 45-65; it reads AFLSLAIFIASLLTILNISIF. The Cytoplasmic segment spans residues 66-84; sequence ATTVSRLRRHLDKPLLGPS. Residues 85–105 form a helical membrane-spanning segment; that stretch reads IMMVGLYPIISVAALVTILVP. A topological domain (extracellular) is located at residue Tyr-106. The chain crosses the membrane as a helical span at residues 107 to 127; it reads SWFICHTVMHVMFMVGGPVFR. Over 128–177 the chain is Cytoplasmic; that stretch reads TLLFRYVGSEQNYVKETAGEAVQLNTPPCCCCCLCLPMVIPTKAKLCISR. The helical transmembrane segment at 178 to 198 threads the bilayer; it reads YMVWQMPFWQGSIMLVMNILY. Over 199–208 the chain is Extracellular; it reads YRDIQLYRQV. Residues 209-229 form a helical membrane-spanning segment; that stretch reads MFFFIPFIVCSIVLGAWSLQI. At 230–247 the chain is on the cytoplasmic side; that stretch reads TVRMITKVRGDYQLRKKM. A helical membrane pass occupies residues 248–265; it reads FCLQLVVMLCKLQYLVLY. Over 266-287 the chain is Extracellular; the sequence is DQLDGIKMGGEYPINHTVYKQT. Asn-280 is a glycosylation site (N-linked (GlcNAc...) asparagine). A helical membrane pass occupies residues 288–308; sequence IINILILVEMVLVSMMVQSAY. Residues 309–328 lie on the Cytoplasmic side of the membrane; that stretch reads RTPVQVQIDEVNKEKEVTRI.

Belongs to the OST-alpha family.

Its subcellular location is the cell membrane. Probable transporter. The sequence is that of Organic solute transporter alpha-like protein from Drosophila melanogaster (Fruit fly).